A 357-amino-acid chain; its full sequence is Vomeronasal type-1 receptor 5 (357 aa).

Topologically, residues 1–3 (MLK) are extracellular. Residues 4–24 (LVIIENMAEIMLFSLDLLLFS) form a helical membrane-spanning segment. Over 25-52 (TDILCFNFPSKMIKLPGFITIQIFFYPQ) the chain is Cytoplasmic. A helical membrane pass occupies residues 53–73 (ASFGISANTILFLFHIFTFVF). The Extracellular portion of the chain corresponds to 74–81 (SHRSKSID). The helical transmembrane segment at 82 to 102 (MIISHLSLIHILLLFTQAILV) threads the bilayer. Over 103 to 130 (SLDFFGSQNTQDDLRCKVIVFLNKVMRG) the chain is Cytoplasmic. The chain crosses the membrane as a helical span at residues 131-151 (LSICTPCLLNVLQAIISPSIF). Over 152–163 (SLAKLKHPSASH) the chain is Extracellular. Residues 164–184 (ILGFFLFSWVLNMFIGVIFCC) traverse the membrane as a helical segment. At 185 to 269 (TLWLPPVKWG…PVSPVKRASQ (85 aa)) the chain is on the cytoplasmic side. The chain crosses the membrane as a helical span at residues 270–290 (TILLLVSFVFIYWVDFMFSFS). At 291 to 300 (RGVTWINDSL) the chain is on the extracellular side. A glycan (N-linked (GlcNAc...) asparagine) is linked at Asn-297. The chain crosses the membrane as a helical span at residues 301–321 (LVWFQVIVANSYATISPLMLI). The Cytoplasmic segment spans residues 322–357 (YADNQIFKTLQMLWFKYLSPPKLMLKFNRQCGSTKK).

This sequence belongs to the G-protein coupled receptor 1 family.

Its subcellular location is the cell membrane. Its function is as follows. Putative pheromone receptor. This chain is Vomeronasal type-1 receptor 5 (VN1R5), found in Gorilla gorilla gorilla (Western lowland gorilla).